A 99-amino-acid polypeptide reads, in one-letter code: NADH-quinone oxidoreductase subunit K (99 aa).

Transmembrane regions (helical) follow at residues 3–23, 28–48, and 62–82; these read PANY…GVLV, IVVF…LVTF, and FFVM…ILAI.

The protein belongs to the complex I subunit 4L family. NDH-1 is composed of 14 different subunits. Subunits NuoA, H, J, K, L, M, N constitute the membrane sector of the complex.

The protein resides in the cell membrane. The catalysed reaction is a quinone + NADH + 5 H(+)(in) = a quinol + NAD(+) + 4 H(+)(out). Functionally, NDH-1 shuttles electrons from NADH, via FMN and iron-sulfur (Fe-S) centers, to quinones in the respiratory chain. The immediate electron acceptor for the enzyme in this species is believed to be a menaquinone. Couples the redox reaction to proton translocation (for every two electrons transferred, four hydrogen ions are translocated across the cytoplasmic membrane), and thus conserves the redox energy in a proton gradient. In Parafrankia sp. (strain EAN1pec), this protein is NADH-quinone oxidoreductase subunit K.